Reading from the N-terminus, the 1336-residue chain is SH3 domain and tetratricopeptide repeat-containing protein 1 (1336 aa).

At M1 the chain carries N-acetylmethionine. 2 disordered regions span residues 1–76 (MENL…PPCQ) and 225–266 (TGPR…SEEV). Positions 18-27 (GPVGPSGGGS) are enriched in gly residues. Over residues 46–61 (AGPEEAKAPVRGDEAP) the composition is skewed to basic and acidic residues. Composition is skewed to low complexity over residues 62–74 (PARVAGPAAGTPP) and 247–266 (EAAPETDSSPPSPSVSSEEV). Residues 305–368 (MAVGLASALA…RSSLISMQGP (64 aa)) form the SH3 domain. TPR repeat units follow at residues 560–593 (ARLCFLLGRLCSRRLKLSQARVYFEEALGALEGS), 601–634 (VAVYANLASIYRKQKNREKCAQVVPKAMALLLGT), 665–698 (ARACFLLARHHVHLKQPEEALPFLERLLLLHRDS), 786–819 (GPLYTSLAQLYSHHGCHGPAITFMTQAVEASAIA), 863–896 (GVIANMVAVALKRTGRTRQAAESYYRALRVARDL), 946–979 (THVLLQLGHLCTRQGPAQQGKGYYEWALLVAVEM), 1027–1063 (GQLLETISQLYLSLGTERAYKSALDYTKRSLGIFIDL), and 1192–1225 (RVAYHRLAALQHRLGHGELAEHFYLKALSLCNSP). At Y1248 the chain carries Phosphotyrosine. The stretch at 1277–1311 (LKIYTRLATIYHNFLLDREKSLFFYQKARTFATEL) is one TPR 9 repeat.

This is SH3 domain and tetratricopeptide repeat-containing protein 1 (SH3TC1) from Homo sapiens (Human).